A 275-amino-acid chain; its full sequence is Orotidine 5'-phosphate decarboxylase (275 aa).

Residue lysine 95 is the Proton donor of the active site.

Belongs to the OMP decarboxylase family. Type 2 subfamily.

It carries out the reaction orotidine 5'-phosphate + H(+) = UMP + CO2. It functions in the pathway pyrimidine metabolism; UMP biosynthesis via de novo pathway; UMP from orotate: step 2/2. This Delftia acidovorans (strain DSM 14801 / SPH-1) protein is Orotidine 5'-phosphate decarboxylase.